A 176-amino-acid chain; its full sequence is MTMCSGARLALLVYGILMHSSVYGSPAASGLRFPGIRPENEAYDEDGNPQQDFYDSEPPGVGSPASALRDAYALYYPAEERDVAHGILDKAYRKVLDQLSARRYLQTLMAKGLGGTPGGGADDDSEPLSKRHSDGIFTDSYSRYRKQMAVKKYLAAVLGKRYKQRVKNKGRRIPYL.

Residues 1-24 form the signal peptide; the sequence is MTMCSGARLALLVYGILMHSSVYG. Residues 25–80 constitute a propeptide that is removed on maturation; sequence SPAASGLRFPGIRPENEAYDEDGNPQQDFYDSEPPGVGSPASALRDAYALYYPAEE. Disordered stretches follow at residues 36–62 and 115–134; these read IRPE…PGVG and GTPG…RHSD. Residues 150-158 form an important for receptor binding region; sequence VKKYLAAVL. A Leucine amide modification is found at Leu158. The residue at position 169 (Lys169) is a Lysine amide. A propeptide spanning residues 173-176 is cleaved from the precursor; sequence IPYL.

The protein belongs to the glucagon family.

The protein localises to the secreted. Functionally, PACAP is a neuropeptide involved in diverse array of physiological processes through activating the PACAP subfamily of class B1 G protein-coupled receptors: VIP receptor 1 (VIPR1), VIP receptor 2 (VIPR2), and PACAP type I receptor (ADCYAP1R1). Exerts neuroprotective and general cytoprotective effects due to anti-apoptotic, anti-inflammatory, and antioxidant actions. Promotes neuron projection development through the RAPGEF2/Rap1/B-Raf/ERK pathway. In chromaffin cells, induces long-lasting increase of intracellular calcium concentrations and neuroendocrine secretion. Involved in the control of glucose homeostasis, induces insulin secretion by pancreatic beta cells. PACAP exists in two bioactive forms from proteolysis of the same precursor protein, PACAP27 and PACAP38, which differ by eleven amino acid residues in the C-terminus. In Ovis aries (Sheep), this protein is Pituitary adenylate cyclase-activating polypeptide (ADCYAP1).